The sequence spans 238 residues: tRNA1(Val) (adenine(37)-N6)-methyltransferase (238 aa).

It belongs to the methyltransferase superfamily. tRNA (adenine-N(6)-)-methyltransferase family.

It localises to the cytoplasm. It catalyses the reaction adenosine(37) in tRNA1(Val) + S-adenosyl-L-methionine = N(6)-methyladenosine(37) in tRNA1(Val) + S-adenosyl-L-homocysteine + H(+). Its function is as follows. Specifically methylates the adenine in position 37 of tRNA(1)(Val) (anticodon cmo5UAC). This Shewanella putrefaciens (strain CN-32 / ATCC BAA-453) protein is tRNA1(Val) (adenine(37)-N6)-methyltransferase.